Reading from the N-terminus, the 87-residue chain is Mitochondrial import protein 2 (87 aa).

The Cytoplasmic portion of the chain corresponds to 1–53 (MADSEDTSVILQGIDTINSVEGLEEDGYLSDEDTSLSNELADAQRQWEESLQQ). Residues 54 to 71 (LNKLLNWVLLPLLGKYIG) traverse the membrane as a helical segment. The Mitochondrial intermembrane segment spans residues 72 to 87 (RRMAKTLWSRFIEHFV).

This sequence belongs to the MIM2 family. In terms of assembly, component of the MIM complex containing at least MIM1 and MIM2. Interacts with MIM1; interaction is direct.

It localises to the mitochondrion outer membrane. Its function is as follows. Component of the MIM complex required for outer membrane protein import. Involved in import of the subset of proteins with multiple alpha-helical transmembrane segments, including UGO1, TOM20 and FZO1. The sequence is that of Mitochondrial import protein 2 from Saccharomyces cerevisiae (strain ATCC 204508 / S288c) (Baker's yeast).